The sequence spans 256 residues: Biosynthetic peptidoglycan transglycosylase (256 aa).

Residues 26-48 (VARWLAYVGGVFAGAWLATQLYY) traverse the membrane as a helical segment.

Belongs to the glycosyltransferase 51 family.

It localises to the cell inner membrane. The enzyme catalyses [GlcNAc-(1-&gt;4)-Mur2Ac(oyl-L-Ala-gamma-D-Glu-L-Lys-D-Ala-D-Ala)](n)-di-trans,octa-cis-undecaprenyl diphosphate + beta-D-GlcNAc-(1-&gt;4)-Mur2Ac(oyl-L-Ala-gamma-D-Glu-L-Lys-D-Ala-D-Ala)-di-trans,octa-cis-undecaprenyl diphosphate = [GlcNAc-(1-&gt;4)-Mur2Ac(oyl-L-Ala-gamma-D-Glu-L-Lys-D-Ala-D-Ala)](n+1)-di-trans,octa-cis-undecaprenyl diphosphate + di-trans,octa-cis-undecaprenyl diphosphate + H(+). Its pathway is cell wall biogenesis; peptidoglycan biosynthesis. In terms of biological role, peptidoglycan polymerase that catalyzes glycan chain elongation from lipid-linked precursors. This Burkholderia pseudomallei (strain K96243) protein is Biosynthetic peptidoglycan transglycosylase.